We begin with the raw amino-acid sequence, 320 residues long: UV DNA damage endonuclease (320 aa).

It belongs to the uve1/UvsE family.

In terms of biological role, component in a DNA repair pathway. Removal of UV LIGHT damaged nucleotides. Recognizes pyrimidine dimers and cleave a phosphodiester bond immediately 5' to the lesion. The chain is UV DNA damage endonuclease from Bacillus pumilus (strain SAFR-032).